The following is a 591-amino-acid chain: L-fucose isomerase (591 aa).

Active-site proton acceptor residues include E337 and D361. Mn(2+) is bound by residues E337, D361, and H528.

This sequence belongs to the L-fucose isomerase family. Homohexamer. Requires Mn(2+) as cofactor.

Its subcellular location is the cytoplasm. It catalyses the reaction L-fucose = L-fuculose. It carries out the reaction D-arabinose = D-ribulose. The catalysed reaction is L-xylopyranose = L-xylulose. It participates in carbohydrate degradation; L-fucose degradation; L-lactaldehyde and glycerone phosphate from L-fucose: step 1/3. With respect to regulation, inhibited by ribitol, L-arabitol and dulcitol. Isomerization of L-xylulose to L-xylose is inhibited by xylitol. Functionally, converts the aldose L-fucose into the corresponding ketose L-fuculose. Also converts D-arabinose into D-ribulose. In addition, catalyzes the isomerization of L-xylulose to L-xylose. This chain is L-fucose isomerase, found in Escherichia coli (strain K12).